Here is a 395-residue protein sequence, read N- to C-terminus: Phosphoglycerate kinase (395 aa).

Substrate-binding positions include D21–N23, R36, H59–R62, R120, and R153. ATP-binding positions include K203, E325, and G351 to S354.

Belongs to the phosphoglycerate kinase family. Monomer.

The protein resides in the cytoplasm. It catalyses the reaction (2R)-3-phosphoglycerate + ATP = (2R)-3-phospho-glyceroyl phosphate + ADP. It participates in carbohydrate degradation; glycolysis; pyruvate from D-glyceraldehyde 3-phosphate: step 2/5. The sequence is that of Phosphoglycerate kinase from Roseiflexus sp. (strain RS-1).